The primary structure comprises 360 residues: Peptide chain release factor 1 (360 aa).

Position 235 is an N5-methylglutamine (Q235).

Belongs to the prokaryotic/mitochondrial release factor family. Methylated by PrmC. Methylation increases the termination efficiency of RF1.

Its subcellular location is the cytoplasm. Functionally, peptide chain release factor 1 directs the termination of translation in response to the peptide chain termination codons UAG and UAA. The chain is Peptide chain release factor 1 from Paracidovorax citrulli (strain AAC00-1) (Acidovorax citrulli).